A 501-amino-acid chain; its full sequence is tRNA (guanine(37)-N(1))-methyltransferase (501 aa).

S-adenosyl-L-methionine-binding positions include His282, 320 to 321 (DL), 348 to 349 (DG), and Asn380. The tract at residues 474 to 501 (LQNDQEPPLKRQKTGDPFSGEPQIASDS) is disordered.

It belongs to the class I-like SAM-binding methyltransferase superfamily. TRM5/TYW2 family. In terms of assembly, monomer.

It is found in the mitochondrion matrix. The protein localises to the nucleus. The protein resides in the cytoplasm. It catalyses the reaction guanosine(37) in tRNA + S-adenosyl-L-methionine = N(1)-methylguanosine(37) in tRNA + S-adenosyl-L-homocysteine + H(+). In terms of biological role, involved in mitochondrial tRNA methylation. Specifically methylates the N1 position of guanosine-37 in various tRNAs. Methylation is not dependent on the nature of the nucleoside 5' of the target nucleoside. This is the first step in the biosynthesis of wybutosine (yW), a modified base adjacent to the anticodon of tRNAs and required for accurate decoding. The sequence is that of tRNA (guanine(37)-N(1))-methyltransferase (Trmt5) from Mus musculus (Mouse).